The primary structure comprises 194 residues: Peptidyl-tRNA hydrolase (194 aa).

Y16 contributes to the tRNA binding site. H21 acts as the Proton acceptor in catalysis. TRNA is bound by residues F67, N69, and N115.

Belongs to the PTH family. Monomer.

It localises to the cytoplasm. It catalyses the reaction an N-acyl-L-alpha-aminoacyl-tRNA + H2O = an N-acyl-L-amino acid + a tRNA + H(+). In terms of biological role, hydrolyzes ribosome-free peptidyl-tRNAs (with 1 or more amino acids incorporated), which drop off the ribosome during protein synthesis, or as a result of ribosome stalling. Its function is as follows. Catalyzes the release of premature peptidyl moieties from peptidyl-tRNA molecules trapped in stalled 50S ribosomal subunits, and thus maintains levels of free tRNAs and 50S ribosomes. In Colwellia psychrerythraea (strain 34H / ATCC BAA-681) (Vibrio psychroerythus), this protein is Peptidyl-tRNA hydrolase.